The chain runs to 331 residues: Beta-ketoacyl-[acyl-carrier-protein] synthase III (331 aa).

Active-site residues include Cys113 and His253. The tract at residues 254–258 is ACP-binding; it reads QANTR. Asn283 is a catalytic residue.

It belongs to the thiolase-like superfamily. FabH family. Homodimer.

The protein resides in the cytoplasm. The enzyme catalyses malonyl-[ACP] + acetyl-CoA + H(+) = 3-oxobutanoyl-[ACP] + CO2 + CoA. It participates in lipid metabolism; fatty acid biosynthesis. In terms of biological role, catalyzes the condensation reaction of fatty acid synthesis by the addition to an acyl acceptor of two carbons from malonyl-ACP. Catalyzes the first condensation reaction which initiates fatty acid synthesis and may therefore play a role in governing the total rate of fatty acid production. Possesses both acetoacetyl-ACP synthase and acetyl transacylase activities. Its substrate specificity determines the biosynthesis of branched-chain and/or straight-chain of fatty acids. This Desulfitobacterium hafniense (strain Y51) protein is Beta-ketoacyl-[acyl-carrier-protein] synthase III.